The primary structure comprises 112 residues: Large ribosomal subunit protein bL17 (112 aa).

This sequence belongs to the bacterial ribosomal protein bL17 family. As to quaternary structure, part of the 50S ribosomal subunit. Contacts protein L32.

In Desulforudis audaxviator (strain MP104C), this protein is Large ribosomal subunit protein bL17.